Reading from the N-terminus, the 150-residue chain is Arginine repressor (150 aa).

The protein belongs to the ArgR family.

The protein resides in the cytoplasm. Its pathway is amino-acid biosynthesis; L-arginine biosynthesis [regulation]. Regulates arginine biosynthesis genes. In Halothermothrix orenii (strain H 168 / OCM 544 / DSM 9562), this protein is Arginine repressor.